A 744-amino-acid polypeptide reads, in one-letter code: MAADKPADQGAEKHEGTGQSSGITDQEKELSTNAFQAFTSGNYDACLQHLACLQDINKDDYKIILNTAVAEFFKSNQTTTDNLRQTLNQLKNQVHSAVEEMDGLDDVENSMLYYNQAVILYHLRQYTEAISVGEKLYQFIEPFEEKFAQAVCFLLVDLYILTYQAEKALHLLAVLEKMISQGNNNKNGKNETGNNNNKDGSNHKAESGALIEAAKSKIHQYIVRAYIQMKSLKACKREIKSVMNTAGNSAPSLFLKSNFEYLRGNYRKAVKLLNSSNIAEHPGFMKTGECLRCMFWNNLGCIHFAMSKHNLGIFYFKKALQENDNVCAQLSAGSTDPGKKFSGRPMCTLLTNKRYELLYNCGIQLLHIGRPLAAFECLIEAVQVYHANPRLWLRLAECCIAANKGTSEQETKGLPSKKGIVQSIVGQGYHRKIVLASQSIQNTVYNDGQSSAIPVASMEFAAICLRNALLLLPEEQQDPKQENGAKNSNQLGGNTESSESSETCSSKSHDGDKFIPAPPSSPLRKQELENLKCSILACSAYVALALGDNLMALNHADKLLQQPKLSGSLKFLGHLYAAEALISLDRISDAITHLNPENVTDVSLGISSNEQDQGSDKGENEAMESSGKRAPQCYPSSVNSARTVMLFNLGSAYCLRSEYDKARKCLHQAASMIHPKEVPPEAILLAVYLELQNGNTQLALQIIKRNQLLPAVKTHSEVRKKPVFQPVHPIQPIQMPAFTTVQRK.

Residues methionine 1 to glycine 16 are compositionally biased toward basic and acidic residues. The interval methionine 1 to aspartate 25 is disordered. Alanine 2 bears the N-acetylalanine mark. Residues lysine 74–valine 107 adopt a coiled-coil conformation. A compositionally biased stretch (low complexity) spans asparagine 183 to aspartate 199. 3 disordered regions span residues asparagine 183 to lysine 204, glutamine 477 to serine 521, and valine 602 to tyrosine 634. Positions glycine 484–threonine 495 are enriched in polar residues. The segment covering glutamate 496–serine 506 has biased composition (low complexity). The segment covering valine 602 to aspartate 612 has biased composition (polar residues).

The protein belongs to the CNOT10 family. As to quaternary structure, component of the CCR4-NOT complex; distinct complexes seem to exist that differ in the participation of probably mutually exclusive catalytic subunits. CNOT10 and CNOT11 form a subcomplex docked to the CNOT1 scaffold.

The protein localises to the cytoplasm. It is found in the nucleus. Component of the CCR4-NOT complex which is one of the major cellular mRNA deadenylases and is linked to various cellular processes including bulk mRNA degradation, miRNA-mediated repression, translational repression during translational initiation and general transcription regulation. Additional complex functions may be a consequence of its influence on mRNA expression. Is not required for association of CNOT7 to the CCR4-NOT complex. This is CCR4-NOT transcription complex subunit 10 (CNOT10) from Macaca fascicularis (Crab-eating macaque).